We begin with the raw amino-acid sequence, 336 residues long: Fructose-1,6-bisphosphatase class 1 (336 aa).

Mg(2+)-binding residues include Glu90, Asp112, Leu114, and Asp115. Substrate is bound by residues 115–118 (DGSS), Asn211, and Lys277. Residue Glu283 participates in Mg(2+) binding.

This sequence belongs to the FBPase class 1 family. In terms of assembly, homotetramer. Requires Mg(2+) as cofactor.

It is found in the cytoplasm. The catalysed reaction is beta-D-fructose 1,6-bisphosphate + H2O = beta-D-fructose 6-phosphate + phosphate. It participates in carbohydrate biosynthesis; gluconeogenesis. The polypeptide is Fructose-1,6-bisphosphatase class 1 (Pseudomonas putida (strain GB-1)).